The following is a 198-amino-acid chain: Imidazoleglycerol-phosphate dehydratase (198 aa).

The protein belongs to the imidazoleglycerol-phosphate dehydratase family.

It is found in the cytoplasm. It carries out the reaction D-erythro-1-(imidazol-4-yl)glycerol 3-phosphate = 3-(imidazol-4-yl)-2-oxopropyl phosphate + H2O. It functions in the pathway amino-acid biosynthesis; L-histidine biosynthesis; L-histidine from 5-phospho-alpha-D-ribose 1-diphosphate: step 6/9. The polypeptide is Imidazoleglycerol-phosphate dehydratase (Nitratidesulfovibrio vulgaris (strain DP4) (Desulfovibrio vulgaris)).